The following is a 240-amino-acid chain: Ubiquinone biosynthesis O-methyltransferase (240 aa).

Residues Arg-44, Gly-64, Asp-85, and Met-129 each coordinate S-adenosyl-L-methionine.

It belongs to the methyltransferase superfamily. UbiG/COQ3 family.

It carries out the reaction a 3-demethylubiquinol + S-adenosyl-L-methionine = a ubiquinol + S-adenosyl-L-homocysteine + H(+). The catalysed reaction is a 3-(all-trans-polyprenyl)benzene-1,2-diol + S-adenosyl-L-methionine = a 2-methoxy-6-(all-trans-polyprenyl)phenol + S-adenosyl-L-homocysteine + H(+). Its pathway is cofactor biosynthesis; ubiquinone biosynthesis. O-methyltransferase that catalyzes the 2 O-methylation steps in the ubiquinone biosynthetic pathway. In Shigella flexneri serotype 5b (strain 8401), this protein is Ubiquinone biosynthesis O-methyltransferase.